The chain runs to 189 residues: Ras-like protein 1 (189 aa).

Residue 10–17 (GGGGVGKS) coordinates GTP. An Effector region motif is present at residues 32–40 (YDPTIEDSY). Residues 57-61 (DTAGQ) and 116-119 (NKCD) contribute to the GTP site. A Cysteine methyl ester modification is found at Cys186. Cys186 carries the S-geranylgeranyl cysteine lipid modification. The propeptide at 187–189 (LLL) is removed in mature form.

It belongs to the small GTPase superfamily. Ras family.

Its subcellular location is the cell membrane. The enzyme catalyses GTP + H2O = GDP + phosphate + H(+). In terms of biological role, ras proteins bind GDP/GTP and possess intrinsic GTPase activity. The sequence is that of Ras-like protein 1 (RAS1) from Physarum polycephalum (Slime mold).